Here is a 218-residue protein sequence, read N- to C-terminus: Thiopurine S-methyltransferase (218 aa).

S-adenosyl-L-methionine-binding residues include Trp-10, Leu-45, Glu-66, and Arg-123.

Belongs to the class I-like SAM-binding methyltransferase superfamily. TPMT family.

It is found in the cytoplasm. The catalysed reaction is S-adenosyl-L-methionine + a thiopurine = S-adenosyl-L-homocysteine + a thiopurine S-methylether.. In Shewanella baltica (strain OS195), this protein is Thiopurine S-methyltransferase.